A 575-amino-acid chain; its full sequence is Dihydroxy-acid dehydratase (575 aa).

The tract at residues 1–27 (MSNQERQERPEKDPDLRSTEVTEGYEK) is disordered. Cysteine 61 serves as a coordination point for [2Fe-2S] cluster. Aspartate 93 contacts Mg(2+). Cysteine 134 is a [2Fe-2S] cluster binding site. Residues aspartate 135 and lysine 136 each contribute to the Mg(2+) site. Lysine 136 is modified (N6-carboxylysine). Cysteine 206 serves as a coordination point for [2Fe-2S] cluster. Glutamate 460 provides a ligand contact to Mg(2+). The active-site Proton acceptor is the serine 486.

It belongs to the IlvD/Edd family. Homodimer. The cofactor is [2Fe-2S] cluster. Mg(2+) is required as a cofactor.

The catalysed reaction is (2R)-2,3-dihydroxy-3-methylbutanoate = 3-methyl-2-oxobutanoate + H2O. It carries out the reaction (2R,3R)-2,3-dihydroxy-3-methylpentanoate = (S)-3-methyl-2-oxopentanoate + H2O. It participates in amino-acid biosynthesis; L-isoleucine biosynthesis; L-isoleucine from 2-oxobutanoate: step 3/4. It functions in the pathway amino-acid biosynthesis; L-valine biosynthesis; L-valine from pyruvate: step 3/4. Functionally, functions in the biosynthesis of branched-chain amino acids. Catalyzes the dehydration of (2R,3R)-2,3-dihydroxy-3-methylpentanoate (2,3-dihydroxy-3-methylvalerate) into 2-oxo-3-methylpentanoate (2-oxo-3-methylvalerate) and of (2R)-2,3-dihydroxy-3-methylbutanoate (2,3-dihydroxyisovalerate) into 2-oxo-3-methylbutanoate (2-oxoisovalerate), the penultimate precursor to L-isoleucine and L-valine, respectively. In Haloarcula marismortui (strain ATCC 43049 / DSM 3752 / JCM 8966 / VKM B-1809) (Halobacterium marismortui), this protein is Dihydroxy-acid dehydratase.